The following is a 168-amino-acid chain: Photosystem I assembly protein Ycf3 (168 aa).

3 TPR repeats span residues 35 to 68 (AFTYYRDGMSAQSEGNYAEALQNYYEAMRLEIDP), 72 to 105 (SYILYNIGLIHTSNGEHTKALEYYFRALERNPFL), and 120 to 153 (GEQAIRQGDSEIAEAWFDQAAEYWKQAIALTPGN).

This sequence belongs to the Ycf3 family.

The protein resides in the plastid. Its subcellular location is the chloroplast thylakoid membrane. In terms of biological role, essential for the assembly of the photosystem I (PSI) complex. May act as a chaperone-like factor to guide the assembly of the PSI subunits. This Helianthus annuus (Common sunflower) protein is Photosystem I assembly protein Ycf3.